The chain runs to 219 residues: Large ribosomal subunit protein uL16 (219 aa).

The protein belongs to the universal ribosomal protein uL16 family. As to quaternary structure, component of the small ribosomal subunit. Mature ribosomes consist of a small (40S) and a large (60S) subunit. The 40S subunit contains about 33 different proteins and 1 molecule of RNA (18S). The 60S subunit contains about 49 different proteins and 3 molecules of RNA (25S, 5.8S and 5S).

This Solanum melongena (Eggplant) protein is Large ribosomal subunit protein uL16 (RPL10).